The chain runs to 75 residues: DNA-directed RNA polymerase subunit epsilon (75 aa).

Belongs to the RNA polymerase subunit epsilon family. RNAP is composed of a core of 2 alpha, a beta and a beta' subunit. The core is associated with a delta subunit, and at least one of epsilon or omega. When a sigma factor is associated with the core the holoenzyme is formed, which can initiate transcription.

The catalysed reaction is RNA(n) + a ribonucleoside 5'-triphosphate = RNA(n+1) + diphosphate. Functionally, a non-essential component of RNA polymerase (RNAP). In Lactobacillus johnsonii (strain CNCM I-12250 / La1 / NCC 533), this protein is DNA-directed RNA polymerase subunit epsilon.